We begin with the raw amino-acid sequence, 310 residues long: Porphobilinogen deaminase (310 aa).

Residue Cys-240 is modified to S-(dipyrrolylmethanemethyl)cysteine.

This sequence belongs to the HMBS family. As to quaternary structure, monomer. Dipyrromethane is required as a cofactor.

The enzyme catalyses 4 porphobilinogen + H2O = hydroxymethylbilane + 4 NH4(+). Its pathway is porphyrin-containing compound metabolism; protoporphyrin-IX biosynthesis; coproporphyrinogen-III from 5-aminolevulinate: step 2/4. Tetrapolymerization of the monopyrrole PBG into the hydroxymethylbilane pre-uroporphyrinogen in several discrete steps. The protein is Porphobilinogen deaminase of Desulfosudis oleivorans (strain DSM 6200 / JCM 39069 / Hxd3) (Desulfococcus oleovorans).